Consider the following 2488-residue polypeptide: Neuron navigator 2 (2488 aa).

A Calponin-homology (CH) domain is found at 85-192; that stretch reads GFDTQIYTDW…LFFSLSRYKQ (108 aa). 3 stretches are compositionally biased toward low complexity: residues 194 to 204, 221 to 247, and 255 to 267; these read QQQPQKQHLSS, QAGTPQQQVPVTPQAPCQPHQPAPHQQ, and QSSASSKDSSQSK. Disordered stretches follow at residues 194–675 and 706–727; these read QQQP…GSNT and TEGNVTAESSSTGVSVEPSHFT. Residues 299-315 show a composition bias toward polar residues; sequence GGSTTANNRRSQSFNNY. Residues 356-369 show a composition bias toward low complexity; sequence SGSSSTPTNCSTSS. Residues 384 to 396 show a composition bias toward polar residues; that stretch reads KSLSVKHSATVSM. Residues 401 to 410 show a composition bias toward pro residues; the sequence is PPGPEAPRPT. A compositionally biased stretch (polar residues) spans 492–506; it reads RTFSRALTNKKSSLK. Positions 498-531 form a coiled coil; the sequence is LTNKKSSLKGNEKEKEKQQREKDKEKSKDLAKRA. Basic and acidic residues predominate over residues 507-547; sequence GNEKEKEKQQREKDKEKSKDLAKRASVTERLDLKEEPKEDP. A compositionally biased stretch (low complexity) spans 592–606; sequence MKSMPGKSPSAPAPS. The segment covering 615-626 has biased composition (polar residues); that stretch reads GKLSSGLPQQKP. 2 stretches are compositionally biased toward low complexity: residues 633-642 and 657-675; these read SSSSSSLASS and SSQTVSGSVGTTQTTGSNT. Over residues 706 to 719 the composition is skewed to polar residues; it reads TEGNVTAESSSTGV. Positions 743-771 form a coiled coil; that stretch reads EARRLRTVKNIADLRQNLEETMSSLRGTQ. Disordered regions lie at residues 804 to 824, 939 to 1151, 1177 to 1200, 1213 to 1283, 1295 to 1338, 1355 to 1412, 1440 to 1460, 1473 to 1560, and 1591 to 1629; these read LSWRLGQSSPRLQAGDAPSMG, LGLG…QSGS, KSSALVSRSAGRKSSMDGAQNQDD, YRSL…SDNE, PAAQ…PIAT, MTQQ…TNAS, SLSSGGVPSHNSSTGLIASSK, VKTT…VTSP, and SLSNADGQYDPYTDSRFRNSSMSLDEKSRTMSRSGSFRD. A compositionally biased stretch (low complexity) spans 939 to 985; the sequence is LGLGDADSWDDSSSVSSGISDTIDNLSTDDINTSSSISSYANTPASS. Residues 1091-1102 are compositionally biased toward basic and acidic residues; the sequence is KTDDAKVSEKGR. Residues 1130–1142 show a composition bias toward polar residues; the sequence is PSSSRTPTANANS. Residues 1220-1245 show a composition bias toward low complexity; it reads SKSNSRNGAGNRSSTSSIDSNISSKS. Residues 1299 to 1309 show a composition bias toward polar residues; that stretch reads PVSSPAQTSLQ. 2 stretches are compositionally biased toward low complexity: residues 1363-1380 and 1388-1404; these read SPSGSGVLSSGSSSPLYS and SPLASSPSSAHSAPSNS. The span at 1440–1456 shows a compositional bias: polar residues; it reads SLSSGGVPSHNSSTGLI. Low complexity predominate over residues 1477–1489; sequence LSESPLSSPAASP. Phosphoserine is present on residues S1480, S1484, and S1488. 2 stretches are compositionally biased toward basic and acidic residues: residues 1498–1510 and 1526–1535; these read RKQDSDPHLDRNT and TQEDAKEWLR. The segment covering 1549 to 1560 has biased composition (low complexity); that stretch reads SPFSSGSSVTSP. Residues 1686–1773 adopt a coiled-coil conformation; the sequence is EEKCQSEIRK…AAAQAAINGV (88 aa). 2 disordered regions span residues 1790 to 1887 and 1951 to 1985; these read ADLR…LRNS and AENDRLKSESQGSGCSRAPSQVSISASPRQSMGLS. Polar residues-rich tracts occupy residues 1800-1820, 1875-1887, and 1959-1985; these read SDSVSSINSATSHSSVGSNIE, NGSTGSTPLLRNS, and ESQGSGCSRAPSQVSISASPRQSMGLS. A coiled-coil region spans residues 1897–1964; sequence MDSEAETVMQ…RLKSESQGSG (68 aa). S1977 carries the phosphoserine modification. 2157–2164 lines the ATP pocket; the sequence is GPSGTGKT. The disordered stretch occupies residues 2423-2488; sequence DGYSMPREGS…ILDSSLESTL (66 aa). A compositionally biased stretch (low complexity) spans 2460-2473; that stretch reads YSSPQSYDSDSNSN.

Belongs to the Nav/unc-53 family. As to expression, highly expressed in the brain, kidney and liver. Also expressed in the thyroid, mammary gland, spinal cord, heart, placenta and lung. Abundantly expressed in colon cancers.

It localises to the nucleus. The enzyme catalyses ATP + H2O = ADP + phosphate + H(+). Functionally, possesses 3' to 5' helicase activity and exonuclease activity. Involved in neuronal development, specifically in the development of different sensory organs. The chain is Neuron navigator 2 (NAV2) from Homo sapiens (Human).